Here is a 178-residue protein sequence, read N- to C-terminus: MSRIGNKVIIIPAGVEIINNDNVVTVKGPKGELTREFNKNIEIKVEGNEMTLVRPDDSKEMKTIHGTTRANLNNMVVGVSEGFKKELEMKGVGYRAQLQGSKLVLSVGKSHQDEVEAPEGITFTVANPTSISVEGINKEVVGQTAAYIRSLRSPEPYKGKGIRYVGEYVRLKEGKTGK.

It belongs to the universal ribosomal protein uL6 family. Part of the 50S ribosomal subunit.

In terms of biological role, this protein binds to the 23S rRNA, and is important in its secondary structure. It is located near the subunit interface in the base of the L7/L12 stalk, and near the tRNA binding site of the peptidyltransferase center. This Streptococcus equi subsp. zooepidemicus (strain H70) protein is Large ribosomal subunit protein uL6.